The chain runs to 460 residues: tRNA modification GTPase MnmE (460 aa).

Residues Arg-29, Glu-91, and Arg-131 each coordinate (6S)-5-formyl-5,6,7,8-tetrahydrofolate. Positions 226–383 constitute a TrmE-type G domain; it reads GLRVALVGRP…LVQAVLERCG (158 aa). Residue Asn-236 participates in K(+) binding. GTP contacts are provided by residues 236 to 241, 255 to 261, and 280 to 283; these read NVGKSS, TDLPGTT, and DTAG. Ser-240 contacts Mg(2+). Residues Thr-255, Leu-257, and Thr-260 each contribute to the K(+) site. Residue Thr-261 participates in Mg(2+) binding. Lys-460 contributes to the (6S)-5-formyl-5,6,7,8-tetrahydrofolate binding site.

This sequence belongs to the TRAFAC class TrmE-Era-EngA-EngB-Septin-like GTPase superfamily. TrmE GTPase family. Homodimer. Heterotetramer of two MnmE and two MnmG subunits. K(+) serves as cofactor.

The protein localises to the cytoplasm. Functionally, exhibits a very high intrinsic GTPase hydrolysis rate. Involved in the addition of a carboxymethylaminomethyl (cmnm) group at the wobble position (U34) of certain tRNAs, forming tRNA-cmnm(5)s(2)U34. In Synechococcus sp. (strain WH7803), this protein is tRNA modification GTPase MnmE.